A 61-amino-acid polypeptide reads, in one-letter code: Protein YncO (61 aa).

The chain crosses the membrane as a helical span at residues 18–38; that stretch reads HVFLYVFYIFLFLVLFIMTIY.

It is found in the cell inner membrane. The chain is Protein YncO from Escherichia coli (strain K12).